Reading from the N-terminus, the 851-residue chain is Protein translocase subunit SecA (851 aa).

ATP-binding positions include Q88, 106-110 (GEGKT), and D496. The Zn(2+) site is built by C828, C830, C839, and H840.

It belongs to the SecA family. As to quaternary structure, monomer and homodimer. Part of the essential Sec protein translocation apparatus which comprises SecA, SecYEG and auxiliary proteins SecDF-YajC and YidC. The cofactor is Zn(2+).

The protein resides in the cell inner membrane. Its subcellular location is the cytoplasm. The catalysed reaction is ATP + H2O + cellular proteinSide 1 = ADP + phosphate + cellular proteinSide 2.. Functionally, part of the Sec protein translocase complex. Interacts with the SecYEG preprotein conducting channel. Has a central role in coupling the hydrolysis of ATP to the transfer of proteins into and across the cell membrane, serving as an ATP-driven molecular motor driving the stepwise translocation of polypeptide chains across the membrane. This chain is Protein translocase subunit SecA, found in Helicobacter hepaticus (strain ATCC 51449 / 3B1).